Consider the following 125-residue polypeptide: Small ribosomal subunit protein uS13 (125 aa).

The tract at residues 95 to 125 is disordered; the sequence is GLPVRGQRTKNNCRTRKGKRKTVANKKKATK.

It belongs to the universal ribosomal protein uS13 family. In terms of assembly, part of the 30S ribosomal subunit. Forms a loose heterodimer with protein S19. Forms two bridges to the 50S subunit in the 70S ribosome.

Its function is as follows. Located at the top of the head of the 30S subunit, it contacts several helices of the 16S rRNA. In the 70S ribosome it contacts the 23S rRNA (bridge B1a) and protein L5 of the 50S subunit (bridge B1b), connecting the 2 subunits; these bridges are implicated in subunit movement. Contacts the tRNAs in the A and P-sites. The chain is Small ribosomal subunit protein uS13 from Cytophaga hutchinsonii (strain ATCC 33406 / DSM 1761 / CIP 103989 / NBRC 15051 / NCIMB 9469 / D465).